The primary structure comprises 342 residues: tRNA(Ile)-lysidine synthase (342 aa).

Residue 31 to 36 participates in ATP binding; sequence SGGQDS.

It belongs to the tRNA(Ile)-lysidine synthase family.

Its subcellular location is the cytoplasm. It carries out the reaction cytidine(34) in tRNA(Ile2) + L-lysine + ATP = lysidine(34) in tRNA(Ile2) + AMP + diphosphate + H(+). Ligates lysine onto the cytidine present at position 34 of the AUA codon-specific tRNA(Ile) that contains the anticodon CAU, in an ATP-dependent manner. Cytidine is converted to lysidine, thus changing the amino acid specificity of the tRNA from methionine to isoleucine. This Nostoc sp. (strain PCC 7120 / SAG 25.82 / UTEX 2576) protein is tRNA(Ile)-lysidine synthase.